The chain runs to 277 residues: Large ribosomal subunit protein uL2 (277 aa).

A disordered region spans residues 225-277 (MNPIDHPHGGGEGKTAAGRHPVSPWGTPSKGFRTRVNKRTDGMIVRRRYSNKG).

It belongs to the universal ribosomal protein uL2 family. In terms of assembly, part of the 50S ribosomal subunit. Forms a bridge to the 30S subunit in the 70S ribosome.

One of the primary rRNA binding proteins. Required for association of the 30S and 50S subunits to form the 70S ribosome, for tRNA binding and peptide bond formation. It has been suggested to have peptidyltransferase activity; this is somewhat controversial. Makes several contacts with the 16S rRNA in the 70S ribosome. In Nitrosospira multiformis (strain ATCC 25196 / NCIMB 11849 / C 71), this protein is Large ribosomal subunit protein uL2.